We begin with the raw amino-acid sequence, 145 residues long: Oleosin L (145 aa).

Alanine 2 is modified (N-acetylalanine). 2 consecutive transmembrane segments (helical) span residues 36–56 and 59–79; these read GSLL…LTIA and LLVI…LLGA. The short motif at 58–69 is the Proline-knot element; sequence PLLVIFSPVLVP. Positions 123–132 are enriched in basic and acidic residues; it reads KAREMKDRAE. Positions 123 to 145 are disordered; the sequence is KAREMKDRAEQFSQQPVAGSQTS. The segment covering 133–145 has biased composition (polar residues); it reads QFSQQPVAGSQTS.

Belongs to the oleosin family. Expressed in seeds (at protein level).

It is found in the lipid droplet. It localises to the membrane. Its function is as follows. May have a structural role to stabilize the lipid body during desiccation of the seed by preventing coalescence of the oil. Probably interacts with both lipid and phospholipid moieties of lipid bodies. May also provide recognition signals for specific lipase anchorage in lipolysis during seedling growth. The polypeptide is Oleosin L (Sesamum indicum (Oriental sesame)).